The chain runs to 284 residues: Citrate lyase subunit beta-like protein (284 aa).

Positions 74 and 129 each coordinate substrate. Mg(2+) is bound by residues Glu129 and Asp155.

This sequence belongs to the HpcH/HpaI aldolase family. Citrate lyase beta subunit-like subfamily. In terms of assembly, homotrimer. The cofactor is Mg(2+).

Its function is as follows. May play a role in fatty acid biosynthesis. This is Citrate lyase subunit beta-like protein from Deinococcus radiodurans (strain ATCC 13939 / DSM 20539 / JCM 16871 / CCUG 27074 / LMG 4051 / NBRC 15346 / NCIMB 9279 / VKM B-1422 / R1).